The sequence spans 909 residues: E3 ubiquitin-protein ligase HACE1 (909 aa).

The N-terminal helix important for homodimerization stretch occupies residues 1 to 21; the sequence is MERAMEQLNRLTRSLRRARTV. 7 ANK repeats span residues 23–55, 64–93, 97–126, 130–159, 163–192, 196–226, and 228–253; these read LPEDNETAVYTLMPMVMADQHRSVSELLSNSKF, VKRSLLHIAANCGSVECLVLLLKKGANPNY, SGCTPLHLAARNGQKKCMSKLLEYSADVNI, EGLTAIHWLAVNGRTELLHDLVQHVSDVDV, MGQTALHVACQNGHKTTVQCLLDSGADINR, SGATPLYFACSHGQRDTAQILLLRGAKYLPD, and NGVTPLDLCVQGGYGETCEVLIQYHP. The tract at residues 398–433 is disordered; it reads QDQDAASIPPFEPPGPGSYENLSTGTRESKPDALAG. The region spanning 574–909 is the HECT domain; that stretch reads NCAKLKQGIA…HCGSYGYTMA (336 aa). The active-site Glycyl thioester intermediate is Cys-876.

In terms of assembly, homodimer. The homodimer is autoinhibited and stabilized by its N-terminal helix. Interacts with RAB1 (RAB1A, RAB1B or RAB1C), RAB4 (RAB4A or RAB4B) and RAB11 (RAB11A or RAB11B); in a GTP-dependent manner. Interacts with the 26S proteasomal complex through the 20S core proteasomal subunit. Interacts with RARB. Post-translationally, autoubiquitinated. In terms of tissue distribution, expressed in multiple tissues including heart, brain and kidney.

Its subcellular location is the golgi apparatus. It is found in the golgi stack membrane. The protein localises to the cytoplasm. It localises to the endoplasmic reticulum. The enzyme catalyses S-ubiquitinyl-[E2 ubiquitin-conjugating enzyme]-L-cysteine + [acceptor protein]-L-lysine = [E2 ubiquitin-conjugating enzyme]-L-cysteine + N(6)-ubiquitinyl-[acceptor protein]-L-lysine.. Its pathway is protein modification; protein ubiquitination. Its activity is regulated as follows. Sterically autoinhibited in its dimeric state. Functionally, E3 ubiquitin-protein ligase involved in Golgi membrane fusion and regulation of small GTPases. Acts as a regulator of Golgi membrane dynamics during the cell cycle: recruited to Golgi membrane by Rab proteins and regulates postmitotic Golgi membrane fusion. Acts by mediating ubiquitination during mitotic Golgi disassembly, ubiquitination serving as a signal for Golgi reassembly later, after cell division. Specifically binds GTP-bound RAC1, mediating ubiquitination and subsequent degradation of active RAC1, thereby playing a role in host defense against pathogens. May also act as a transcription regulator via its interaction with RARB. The protein is E3 ubiquitin-protein ligase HACE1 (HACE1) of Homo sapiens (Human).